The following is a 33-amino-acid chain: Photosystem II reaction center protein Psb30 (33 aa).

The helical transmembrane segment at 5 to 25 (IVFQLTALLFVVAAGPLVIVL) threads the bilayer.

The protein belongs to the Psb30/Ycf12 family. PSII is composed of 1 copy each of membrane proteins PsbA, PsbB, PsbC, PsbD, PsbE, PsbF, PsbH, PsbI, PsbJ, PsbK, PsbL, PsbM, PsbT, PsbX, PsbY, PsbZ, Psb30/Ycf12, peripheral proteins of the oxygen-evolving complex and a large number of cofactors. It forms dimeric complexes.

It is found in the plastid. Its subcellular location is the chloroplast thylakoid membrane. Functionally, a core subunit of photosystem II (PSII), probably helps stabilize the reaction center. The chain is Photosystem II reaction center protein Psb30 from Chlorella vulgaris (Green alga).